A 603-amino-acid polypeptide reads, in one-letter code: MATIEEIAHQIIEQQMGEIVTEQQTGQKIQIVTALDHNTQGKQFILTNHDGSTPSKVILARQDSTPGKVFLTTPDAAGVNQLFFTTPDLSAQHLQLLTDNSPDQGPNKVFDLCVVCGDKASGRHYGAVTCEGCKGFFKRSIRKNLVYSCRGSKDCIINKHHRNRCQYCRLQRCIAFGMKQDSVQCERKPIEVSREKSSNCAASTEKIYIRKDLRSPLTATPTFVTDSESTRSTGLLDSGMFMNIHPSGVKTESAVLMTSDKAESCQGDLSTLANVVTSLANLGKTKDLSQNSNEMSMIESLSNDDTSLCEFQEMQTNGDVSRAFDTLAKALNPGESTACQSSVAGMEGSVHLITGDSSINYTEKEGPLLSDSHVAFRLTMPSPMPEYLNVHYIGESASRLLFLSMHWALSIPSFQALGQENSISLVKAYWNELFTLGLAQCWQVMNVATILATFVNCLHNSLQQDKMSTERRKLLMEHIFKLQEFCNSMVKLCIDGYEYAYLKAIVLFSPDHPSLENMEQIEKFQEKAYVEFQDYITKTYPDDTYRLSRLLLRLPALRLMNATITEELFFKGLIGNIRIDSVIPHILKMEPADYNSQIIGHSI.

Residues 1 to 178 (MATIEEIAHQ…RLQRCIAFGM (178 aa)) form a required for interaction with KAT2B region. A DNA-binding region (nuclear receptor) is located at residues 110 to 185 (FDLCVVCGDK…FGMKQDSVQC (76 aa)). 2 NR C4-type zinc fingers span residues 113–133 (CVVC…CEGC) and 149–173 (CRGS…LQRC). Ser-197 and Ser-215 each carry phosphoserine. Thr-220 is subject to Phosphothreonine. At Thr-222 the chain carries Phosphothreonine; by MAPK1. Lys-250 participates in a covalent cross-link: Glycyl lysine isopeptide (Lys-Gly) (interchain with G-Cter in SUMO2). The region spanning 348 to 590 (GSVHLITGDS…SVIPHILKME (243 aa)) is the NR LBD domain. Ser-581 bears the Phosphoserine; by PKC mark. The interval 584–603 (PHILKMEPADYNSQIIGHSI) is required for interaction with NRIP1. Residue Lys-588 forms a Glycyl lysine isopeptide (Lys-Gly) (interchain with G-Cter in SUMO2) linkage.

This sequence belongs to the nuclear hormone receptor family. NR2 subfamily. As to quaternary structure, homodimer. Heterodimer; binds DNA as a heterodimer with NR2C2 required for chromatin remodeling and for binding to promoter regions such as globin DR1 repeats. Interacts with NRIP1 (via its LXXLL motifs); the interaction provides corepressor activity. Interacts with HDAC3 (via the DNA-binding domain). Interacts with HDAC4 (via the DNA-binding domain). Interacts with PIAS1; the interaction is required for sumoylation of NR2C1. Interacts with UBE2I; the interaction is required for sumoylation of NR2C1. Interacts with KAT2B; the interaction acts as a corepressor of gene expression. Interacts with ESR1; the interaction prevents homodimerization of ESR1 and suppresses its transcriptional activity and cell growth. Sumoylation requires both PIAS1 and UBE2I. Sumoylation appears to dissociate NR2C1 from the PML nuclear bodies. Enhances the interaction with NRIP1 but inhibits interaction with KAT2B. In proliferating cells, stimulation by all-trans retinoic acid, activation of MAPK1-mediated phosphorylation and recruitment to PML bodies with subsequent sumoylation, suppresses OCT4 expression. In terms of processing, phosphorylated on several serine and threonine residues. Phosphorylation on Thr-222, stimulated by all-trans retinoic acid (atRA) mediates PML location and sumoylation in proliferating cells which then modulates its association with effector molecules, KAT2B and NRIP1. Phosphorylation on Ser-581 by PKC is important for protein stability and function as activator of RARB.

The protein localises to the nucleus. It is found in the PML body. Its function is as follows. Orphan nuclear receptor. Binds the IR7 element in the promoter of its own gene in an autoregulatory negative feedback mechanism. Primarily repressor of a broad range of genes. Binds to hormone response elements (HREs) consisting of two 5'-AGGTCA-3' half site direct repeat consensus sequences. Together with NR2C2, forms the core of the DRED (direct repeat erythroid-definitive) complex that represses embryonic and fetal globin transcription. Also activator of OCT4 gene expression. May be involved in stem cell proliferation and differentiation. Mediator of retinoic acid-regulated preadipocyte proliferation. The protein is Nuclear receptor subfamily 2 group C member 1 (NR2C1) of Homo sapiens (Human).